The sequence spans 231 residues: Protein OPG061 (231 aa).

Belongs to the orthopoxvirus OPG058 family.

The protein resides in the host nucleus. It localises to the host nucleolus. The sequence is that of Protein OPG061 (OPG061) from Homo sapiens (Human).